Reading from the N-terminus, the 261-residue chain is Peroxiredoxin PRX1, mitochondrial (261 aa).

The transit peptide at 1-13 (MFSRICSAQLKRT) directs the protein to the mitochondrion. Residues 49–212 (LRINSDAPNF…VLRVIDALQL (164 aa)) enclose the Thioredoxin domain. Residue serine 53 is modified to Phosphoserine. Cysteine 91 functions as the Cysteine sulfenic acid (-SOH) intermediate in the catalytic mechanism.

Belongs to the peroxiredoxin family. Prx6 subfamily. Homodimer; disulfide-linked.

The protein localises to the mitochondrion. It carries out the reaction a hydroperoxide + 2 glutathione = an alcohol + glutathione disulfide + H2O. The enzyme catalyses [glutaredoxin]-dithiol + a hydroperoxide = [glutaredoxin]-disulfide + an alcohol + H2O. Thiol-specific peroxidase that catalyzes the reduction of hydrogen peroxide and organic hydroperoxides to water and alcohols, respectively. Plays a role in cell protection against oxidative stress by detoxifying peroxides and as sensor of hydrogen peroxide-mediated signaling events. Involved in mitochondrial protection of cadmium-induced oxidative stress. The sequence is that of Peroxiredoxin PRX1, mitochondrial from Saccharomyces cerevisiae (strain ATCC 204508 / S288c) (Baker's yeast).